We begin with the raw amino-acid sequence, 1206 residues long: uncharacterized protein (1206 aa).

Disordered stretches follow at residues 133-547 (YDLD…PVDY), 568-837 (FASS…DQLL), and 859-1206 (RQRA…KATS). 2 stretches are compositionally biased toward pro residues: residues 139–151 (IPPPPPGPAPGPP) and 159–234 (GESP…PPAP). Serine 255 carries the phosphoserine modification. Residues 305–319 (VRTSSIPVQEAPGAS) are compositionally biased toward low complexity. Residues 351–363 (RALEPEQPREPRP) are compositionally biased toward basic and acidic residues. Over residues 384 to 413 (APPPAPPLPPPAPPLPPPAPSLPPAAPPLP) the composition is skewed to pro residues. A compositionally biased stretch (low complexity) spans 414-436 (STELAAPPSSGFMKTSKSNSPAL). A compositionally biased stretch (basic and acidic residues) spans 454–467 (VDWRDPRQMEKLRS). Residues 522-531 (PEKSPSSSSL) are compositionally biased toward low complexity. Over residues 568–577 (FASSAEKEAK) the composition is skewed to basic and acidic residues. Residues 656–671 (LPKATPGLTLPLKPTP) are compositionally biased toward low complexity. A Phosphothreonine modification is found at threonine 680. Basic and acidic residues predominate over residues 732 to 747 (AEKDLASVRQREKPET). Residues 1001–1016 (IPPPPEFSNDPEPPAP) are compositionally biased toward pro residues. A compositionally biased stretch (polar residues) spans 1028-1041 (PRNNFSDLGQSWGP). Omega-N-methylarginine is present on residues arginine 1051, arginine 1083, and arginine 1094. Residues 1170–1184 (PHGNTHYGSPINTFT) show a composition bias toward polar residues.

This is an uncharacterized protein from Mus musculus (Mouse).